Consider the following 235-residue polypeptide: 6-phosphogluconolactonase (235 aa).

Belongs to the glucosamine/galactosamine-6-phosphate isomerase family. 6-phosphogluconolactonase subfamily.

The enzyme catalyses 6-phospho-D-glucono-1,5-lactone + H2O = 6-phospho-D-gluconate + H(+). It participates in carbohydrate degradation; pentose phosphate pathway; D-ribulose 5-phosphate from D-glucose 6-phosphate (oxidative stage): step 2/3. Its function is as follows. Hydrolysis of 6-phosphogluconolactone to 6-phosphogluconate. The chain is 6-phosphogluconolactonase (pgl) from Borreliella burgdorferi (strain ATCC 35210 / DSM 4680 / CIP 102532 / B31) (Borrelia burgdorferi).